Here is a 216-residue protein sequence, read N- to C-terminus: Adenylate kinase (216 aa).

10-15 (GSGKGT) provides a ligand contact to ATP. Residues 30 to 59 (STGEILRKEIKKNKKTKKYIKKTINKGKLI) form an NMP region. AMP is bound by residues Thr-31, Arg-36, 57-59 (KLI), 85-88 (GFPR), and Gln-92. Residues 121 to 158 (GRLIHASSGRTYHKIFNPPKIKNKDDITQEKLCSRNDD) are LID. Residues Arg-122 and 131 to 132 (TY) contribute to the ATP site. AMP contacts are provided by Arg-155 and Arg-166. Residue Gln-196 participates in ATP binding.

This sequence belongs to the adenylate kinase family. Monomer.

It localises to the cytoplasm. It carries out the reaction AMP + ATP = 2 ADP. It functions in the pathway purine metabolism; AMP biosynthesis via salvage pathway; AMP from ADP: step 1/1. Its function is as follows. Catalyzes the reversible transfer of the terminal phosphate group between ATP and AMP. Plays an important role in cellular energy homeostasis and in adenine nucleotide metabolism. The sequence is that of Adenylate kinase from Buchnera aphidicola subsp. Cinara cedri (strain Cc).